The following is a 233-amino-acid chain: Cell number regulator 8 (233 aa).

A run of 2 helical transmembrane segments spans residues 85–101 (VCLL…GSNV) and 115–138 (CLPY…APWF).

This sequence belongs to the cornifelin family. As to expression, expressed in roots, coleoptiles, leaves, stalks, apical meristems, immature ears, embryos, endosperm, pericarp, silks, tassel spikelets and pollen. Highest expression in the pericarp and stalks.

It is found in the membrane. This Zea mays (Maize) protein is Cell number regulator 8 (CNR8).